Reading from the N-terminus, the 485-residue chain is Bcl-2-like protein 13 (485 aa).

Residues 14–30 carry the BH4 motif; that stretch reads ETKYVVLSYLGLLSQEK. A Phosphoserine modification is found at Ser-38. Positions 100 to 116 match the BH3 motif; that stretch reads MEDCLAHLGEKVSQELK. The BH1 signature appears at 147 to 157; it reads ASGWNKILVPL. A BH2 motif is present at residues 193 to 206; it reads YIIQQGGWGTVFSL. Residues 218–248 are disordered; sequence AEDSNDIYILPSDNSGQVSPPESPTVTTSWQ. The segment covering 229-248 has biased composition (polar residues); that stretch reads SDNSGQVSPPESPTVTTSWQ. Residues 246–256 form an A repeat; it reads SWQSESLPVSL. Residues Ser-259, Ser-261, Ser-303, Ser-326, Ser-371, Ser-375, Ser-410, Ser-420, Ser-426, Ser-429, and Ser-444 each carry the phosphoserine modification. The stretch at 261–271 is one A; approximate repeat; sequence SWHTESLPVSL. Residues 418–451 form a disordered region; sequence EESLVEELSPASEKKPVPPSEGKSRLSPAGEMKP. The stretch at 425-441 is one B repeat; that stretch reads LSPASEKKPVPPSEGKS. A B; approximate repeat occupies 443–459; it reads LSPAGEMKPMPLSEGKS. A helical transmembrane segment spans residues 460 to 480; that stretch reads ILLFGGAAAVAILAVAIGVAL.

The protein belongs to the Bcl-2 family. Monomer. Ubiquitous, with the highest levels of expression in heart, placenta and pancreas.

Its subcellular location is the mitochondrion membrane. The protein resides in the nucleus. May promote the activation of caspase-3 and apoptosis. This chain is Bcl-2-like protein 13 (BCL2L13), found in Homo sapiens (Human).